We begin with the raw amino-acid sequence, 359 residues long: Putative nucleotidyltransferase MAB21L1 (359 aa).

A ribonucleoside 5'-triphosphate-binding positions include 23 to 24 (RK) and 63 to 66 (FEGL). Residues Glu73 and Glu75 each contribute to the Mg(2+) site. A ribonucleoside 5'-triphosphate is bound by residues Lys248 and 252–255 (SLLK).

This sequence belongs to the mab-21 family. Monomer. Homodecamer; composed of 2 back to back homopentamers. The protein may exist as monomer in solution and oiligomerizes upon ligand binding.

It localises to the nucleus. In terms of biological role, putative nucleotidyltransferase required for several aspects of embryonic development including normal development of the eye. It is unclear whether it displays nucleotidyltransferase activity in vivo. Binds single-stranded RNA (ssRNA). The sequence is that of Putative nucleotidyltransferase MAB21L1 (mab21l1) from Danio rerio (Zebrafish).